The chain runs to 28 residues: 14-3-3-like protein 4 (28 aa).

Belongs to the 14-3-3 family.

The sequence is that of 14-3-3-like protein 4 from Pseudotsuga menziesii (Douglas-fir).